Reading from the N-terminus, the 1007-residue chain is Integrator complex subunit 8 (1007 aa).

The WFEF motif motif lies at 19–24 (WFEFLL). The segment covering 56 to 78 (TAQESVGTPGSDLQNLNQTPSNS) has biased composition (polar residues). The segment at 56–112 (TAQESVGTPGSDLQNLNQTPSNSGPIPGVVGGAPAPTTPTASGGVGMPHSPQRPAEK) is disordered. Low complexity predominate over residues 79–97 (GPIPGVVGGAPAPTTPTAS).

It belongs to the Integrator subunit 8 family. As to quaternary structure, belongs to the multiprotein complex Integrator, at least composed of IntS1, IntS2, IntS3, IntS4, omd/IntS5, IntS6, defl/IntS7, IntS8, IntS9, IntS10, IntS11, IntS12, asun/IntS13, IntS14 and IntS15. The core complex associates with protein phosphatase 2A subunits mts/PP2A and Pp2A-29B, to form the Integrator-PP2A (INTAC) complex.

The protein localises to the nucleus. It localises to the chromosome. Its function is as follows. Component of the integrator complex, a multiprotein complex that terminates RNA polymerase II (Pol II) transcription in the promoter-proximal region of genes. The integrator complex provides a quality checkpoint during transcription elongation by driving premature transcription termination of transcripts that are unfavorably configured for transcriptional elongation: the complex terminates transcription by (1) catalyzing dephosphorylation of the C-terminal domain (CTD) of Pol II subunit Polr2A/Rbp1 and Spt5, and (2) degrading the exiting nascent RNA transcript via endonuclease activity. The integrator complex is also involved in the 3'-end processing of the U7 snRNA, and also the spliceosomal snRNAs U1, U2, U4 and U5. Within the integrator complex, INTS8 is required for the recruitment of protein phosphatase 2A (PP2A) to transcription pause-release checkpoint. This chain is Integrator complex subunit 8, found in Drosophila melanogaster (Fruit fly).